The following is a 196-amino-acid chain: Beta-crystallin A4 (196 aa).

T2 carries the post-translational modification N-acetylthreonine. Positions 2–11 (TLQCTKSAGH) are N-terminal arm. Beta/gamma crystallin 'Greek key' domains lie at 12–51 (WRMV…KVLS) and 52–98 (GAWV…RPVA). Residues 99–104 (CANHRD) are connecting peptide. 2 consecutive Beta/gamma crystallin 'Greek key' domains span residues 105–146 (SRLT…HVQS) and 147–195 (GAWV…RRIQ).

This sequence belongs to the beta/gamma-crystallin family. As to quaternary structure, homo/heterodimer, or complexes of higher-order. The structure of beta-crystallin oligomers seems to be stabilized through interactions between the N-terminal arms.

Its function is as follows. Crystallins are the dominant structural components of the vertebrate eye lens. The protein is Beta-crystallin A4 (Cryba4) of Mus musculus (Mouse).